The primary structure comprises 275 residues: Large ribosomal subunit protein uL2c (275 aa).

Positions 219–254 (TVRGSVMNPCDHPHGGGEGRAPIGRTRPLTPWGKPA) are disordered.

It belongs to the universal ribosomal protein uL2 family. Part of the 50S ribosomal subunit.

Its subcellular location is the plastid. It localises to the chloroplast. This is Large ribosomal subunit protein uL2c (rpl2) from Phaeodactylum tricornutum (strain CCAP 1055/1).